A 159-amino-acid polypeptide reads, in one-letter code: uncharacterized protein (159 aa).

The next 3 membrane-spanning stretches (helical) occupy residues 76 to 96 (AIKY…FIGK), 104 to 124 (IVML…FSPT), and 131 to 151 (FGAG…VIGG).

It is found in the membrane. This is an uncharacterized protein from Acanthamoeba polyphaga (Amoeba).